We begin with the raw amino-acid sequence, 424 residues long: Serine hydroxymethyltransferase 2 (424 aa).

(6S)-5,6,7,8-tetrahydrofolate is bound by residues Leu-125 and 129-131 (GHL). Position 234 is an N6-(pyridoxal phosphate)lysine (Lys-234). A (6S)-5,6,7,8-tetrahydrofolate-binding site is contributed by Glu-250.

It belongs to the SHMT family. Homodimer. It depends on pyridoxal 5'-phosphate as a cofactor.

Its subcellular location is the cytoplasm. It catalyses the reaction (6R)-5,10-methylene-5,6,7,8-tetrahydrofolate + glycine + H2O = (6S)-5,6,7,8-tetrahydrofolate + L-serine. Its pathway is one-carbon metabolism; tetrahydrofolate interconversion. The protein operates within amino-acid biosynthesis; glycine biosynthesis; glycine from L-serine: step 1/1. Functionally, catalyzes the reversible interconversion of serine and glycine with tetrahydrofolate (THF) serving as the one-carbon carrier. This reaction serves as the major source of one-carbon groups required for the biosynthesis of purines, thymidylate, methionine, and other important biomolecules. Also exhibits THF-independent aldolase activity toward beta-hydroxyamino acids, producing glycine and aldehydes, via a retro-aldol mechanism. The polypeptide is Serine hydroxymethyltransferase 2 (Ralstonia nicotianae (strain ATCC BAA-1114 / GMI1000) (Ralstonia solanacearum)).